Reading from the N-terminus, the 209-residue chain is LexA repressor (209 aa).

The H-T-H motif DNA-binding region spans Val29–Asp49. Active-site for autocatalytic cleavage activity residues include Ser130 and Lys168.

Belongs to the peptidase S24 family. In terms of assembly, homodimer.

It catalyses the reaction Hydrolysis of Ala-|-Gly bond in repressor LexA.. Functionally, represses a number of genes involved in the response to DNA damage (SOS response), including recA and lexA. In the presence of single-stranded DNA, RecA interacts with LexA causing an autocatalytic cleavage which disrupts the DNA-binding part of LexA, leading to derepression of the SOS regulon and eventually DNA repair. The chain is LexA repressor from Pediococcus pentosaceus (strain ATCC 25745 / CCUG 21536 / LMG 10740 / 183-1w).